The sequence spans 260 residues: Thiazole synthase (260 aa).

Catalysis depends on Lys-102, which acts as the Schiff-base intermediate with DXP. 1-deoxy-D-xylulose 5-phosphate is bound by residues Gly-163, 189–190, and 211–212; these read AG and NT.

Belongs to the ThiG family. Homotetramer. Forms heterodimers with either ThiH or ThiS.

Its subcellular location is the cytoplasm. It catalyses the reaction [ThiS sulfur-carrier protein]-C-terminal-Gly-aminoethanethioate + 2-iminoacetate + 1-deoxy-D-xylulose 5-phosphate = [ThiS sulfur-carrier protein]-C-terminal Gly-Gly + 2-[(2R,5Z)-2-carboxy-4-methylthiazol-5(2H)-ylidene]ethyl phosphate + 2 H2O + H(+). It participates in cofactor biosynthesis; thiamine diphosphate biosynthesis. In terms of biological role, catalyzes the rearrangement of 1-deoxy-D-xylulose 5-phosphate (DXP) to produce the thiazole phosphate moiety of thiamine. Sulfur is provided by the thiocarboxylate moiety of the carrier protein ThiS. In vitro, sulfur can be provided by H(2)S. This chain is Thiazole synthase, found in Citrifermentans bemidjiense (strain ATCC BAA-1014 / DSM 16622 / JCM 12645 / Bem) (Geobacter bemidjiensis).